A 448-amino-acid chain; its full sequence is Microtubule-associated protein tau (448 aa).

Residues 1–16 show a composition bias toward basic and acidic residues; the sequence is MAEPRQEFDVMEDHAQ. Positions 1 to 264 are disordered; it reads MAEPRQEFDV…GPMPDLKNVK (264 aa). Residue Ala-2 is modified to N-acetylalanine. Tyr-19 bears the Phosphotyrosine mark. A Glycyl lysine isopeptide (Lys-Gly) (interchain with G-Cter in ubiquitin) cross-link involves residue Lys-33. A phosphoserine mark is found at Ser-35 and Ser-50. Polar residues predominate over residues 50–60; sequence SETSDAKSTPT. Thr-58 and Thr-60 each carry phosphothreonine. The segment covering 71-89 has biased composition (low complexity); the sequence is EGAPGEQAAAQAPAEIPEG. Thr-100 carries the post-translational modification Phosphothreonine. Residues 119 to 135 show a composition bias toward basic and acidic residues; sequence KGKDGTGPDDKKTKGAD. Residue Thr-144 is modified to Phosphothreonine. An Omega-N-methylarginine modification is found at Arg-146. Lys-154 carries the post-translational modification N6,N6-dimethyllysine; alternate. Lys-154 carries the post-translational modification N6-acetyllysine; alternate. Residues Thr-160, Thr-166, Thr-167, and Thr-172 each carry the phosphothreonine modification. A compositionally biased stretch (low complexity) spans 163–176; sequence PAKTTPTPKTSPAT. Residues 189 to 200 show a composition bias toward basic and acidic residues; that stretch reads KSERGESGKSGD. Phosphoserine occurs at positions 198 and 202. A compositionally biased stretch (low complexity) spans 201-221; that stretch reads RSGYSSPGSPGTPGSRSRTPS. Residue Tyr-204 is modified to Phosphotyrosine. Phosphoserine occurs at positions 205, 206, and 209. 2 positions are modified to phosphothreonine: Thr-212 and Thr-219. The residue at position 221 (Ser-221) is a Phosphoserine. Thr-224 carries the phosphothreonine modification. Lys-232 is subject to N6-acetyllysine. Thr-238 is subject to Phosphothreonine. Phosphoserine occurs at positions 242 and 244. 4 Tau/MAP repeats span residues 251–281, 282–312, 313–343, and 344–375; these read QAAPGPMPDLKNVKSKIGSTENLKHQPGGGK, VQIINKKLDLSNVQSKCGSKDNIKHVPGGGS, VQIVYKPVDLSKVTSKCGSLGNIHHKPGGGQ, and VEVKSEKLDFKDRVQSKIGSLDNITHVPGGGN. Lys-261 participates in a covalent cross-link: Glycyl lysine isopeptide (Lys-Gly) (interchain with G-Cter in ubiquitin). Lys-266 is modified (N6-acetyllysine; alternate). Lys-266 is subject to N6-methyllysine; alternate. Lys-266 participates in a covalent cross-link: Glycyl lysine isopeptide (Lys-Gly) (interchain with G-Cter in ubiquitin); alternate. Ser-269 carries the phosphoserine modification. A Glycyl lysine isopeptide (Lys-Gly) (interchain with G-Cter in ubiquitin) cross-link involves residue Lys-274. At Lys-288 the chain carries N6-acetyllysine; alternate. Lys-288 is covalently cross-linked (Glycyl lysine isopeptide (Lys-Gly) (interchain with G-Cter in ubiquitin); alternate). Phosphoserine occurs at positions 292 and 296. Lys-297 is subject to N6-acetyllysine. Residues Cys-298 and Cys-329 are joined by a disulfide bond. Ser-300 carries the post-translational modification Phosphoserine. N6-acetyllysine; alternate is present on Lys-305. Lys-305 participates in a covalent cross-link: Glycyl lysine isopeptide (Lys-Gly) (interchain with G-Cter in ubiquitin); alternate. The residue at position 312 (Ser-312) is a Phosphoserine. The residue at position 318 (Lys-318) is an N6,N6-dimethyllysine; alternate. Lys-318, Lys-324, and Lys-328 each carry N6-acetyllysine; alternate. Residues Lys-318, Lys-324, and Lys-328 each participate in a glycyl lysine isopeptide (Lys-Gly) (interchain with G-Cter in ubiquitin); alternate cross-link. Position 331 is a phosphoserine (Ser-331). Residues Lys-338, Lys-350, and Lys-354 each carry the N6-acetyllysine; alternate modification. Glycyl lysine isopeptide (Lys-Gly) (interchain with G-Cter in ubiquitin); alternate cross-links involve residues Lys-338, Lys-350, and Lys-354. Arg-356 carries the omega-N-methylarginine modification. Ser-359 is subject to Phosphoserine. Residue Lys-360 forms a Glycyl lysine isopeptide (Lys-Gly) (interchain with G-Cter in ubiquitin) linkage. Residue Ser-363 is modified to Phosphoserine. The residue at position 376 (Lys-376) is an N6-acetyllysine; alternate. Lys-376 is covalently cross-linked (Glycyl lysine isopeptide (Lys-Gly) (interchain with G-Cter in ubiquitin); alternate). A Glycyl lysine isopeptide (Lys-Gly) (interchain with G-Cter in ubiquitin) cross-link involves residue Lys-382. Residue Lys-392 is modified to N6-acetyllysine; alternate. Lys-392 participates in a covalent cross-link: Glycyl lysine isopeptide (Lys-Gly) (interchain with G-Cter in ubiquitin); alternate. Residue Tyr-401 is modified to Phosphotyrosine. Phosphoserine is present on residues Ser-403 and Ser-407. The disordered stretch occupies residues 405 to 424; it reads VVSGDTSPRHLSNVSSTGSI. A compositionally biased stretch (polar residues) spans 408–423; that stretch reads GDTSPRHLSNVSSTGS. The residue at position 410 (Thr-410) is a Phosphothreonine. Phosphoserine occurs at positions 411, 416, 423, and 429. At Thr-434 the chain carries Phosphothreonine.

In terms of assembly, interacts with MARK1, MARK2, MARK3 and MARK4. Interacts with SQSTM1 when polyubiquitinated. Interacts with PSMC2 through SQSTM1. Interacts with FKBP4. Binds to CSNK1D. Interacts with SGK1. Interacts with PIN1. Interacts with LRRK2. Interacts with LRP1, leading to endocytosis; this interaction is reduced in the presence of LRPAP1/RAP. Polyubiquitinated. Requires functional TRAF6 and may provoke SQSTM1-dependent degradation by the proteasome. Post-translationally, phosphorylation at various serine and threonine residues in S-P or T-P motifs by proline-directed protein kinases (PDPK1, CDK1, CDK5, GSK3, MAPK) (a few sites per protein in interphase, more in mitosis), and at serine residues in K-X-G-S motifs by MAP/microtubule affinity-regulating kinase (MARK1, MARK2, MARK3, MARK4), causing detachment from microtubules, and their disassembly. Phosphorylation at Ser-269 by BRSK1 and BRSK2 in neurons affects ability to bind microtubules and plays a role in neuron polarization. Phosphorylated by PHK. Dephosphorylation at several serine and threonine residues by the serine/threonine phosphatase PPP5C. In terms of processing, O-glycosylated; contains at least 4 GlcNAc. Site-specific or stoichiometric changes in glycosylation may modulate tau function and also play a role in PHF's formation. In terms of tissue distribution, expressed in neurons.

The protein resides in the cytoplasm. It is found in the cytosol. The protein localises to the cell membrane. It localises to the cytoskeleton. Its subcellular location is the cell projection. The protein resides in the axon. It is found in the dendrite. The protein localises to the secreted. In terms of biological role, promotes microtubule assembly and stability, and might be involved in the establishment and maintenance of neuronal polarity. The C-terminus binds axonal microtubules while the N-terminus binds neural plasma membrane components, suggesting that tau functions as a linker protein between both. Axonal polarity is predetermined by tau localization (in the neuronal cell) in the domain of the cell body defined by the centrosome. The short isoforms allow plasticity of the cytoskeleton whereas the longer isoforms may preferentially play a role in its stabilization. The sequence is that of Microtubule-associated protein tau (MAPT) from Bos taurus (Bovine).